The primary structure comprises 64 residues: Prokaryotic ubiquitin-like protein Pup (64 aa).

Basic and acidic residues predominate over residues 1–11 (MAQEQTKRTGG). The disordered stretch occupies residues 1-37 (MAQEQTKRTGGGDEDDTPGADGAAGQERREKLAEDTD). The ARC ATPase binding stretch occupies residues 21–58 (DGAAGQERREKLAEDTDDLLDEIDDVLEENAEDFVRAY). Residues 24 to 52 (AGQERREKLAEDTDDLLDEIDDVLEENAE) are a coiled coil. Q64 is subject to Deamidated glutamine. Q64 is covalently cross-linked (Isoglutamyl lysine isopeptide (Gln-Lys) (interchain with K-? in acceptor proteins)).

This sequence belongs to the prokaryotic ubiquitin-like protein family. Strongly interacts with the proteasome-associated ATPase ARC through a hydrophobic interface; the interacting region of Pup lies in its C-terminal half. There is one Pup binding site per ARC hexamer ring. Post-translationally, is modified by deamidation of its C-terminal glutamine to glutamate by the deamidase Dop, a prerequisite to the subsequent pupylation process.

It functions in the pathway protein degradation; proteasomal Pup-dependent pathway. Functionally, protein modifier that is covalently attached to lysine residues of substrate proteins, thereby targeting them for proteasomal degradation. The tagging system is termed pupylation. This chain is Prokaryotic ubiquitin-like protein Pup, found in Rhodococcus jostii (strain RHA1).